Here is a 351-residue protein sequence, read N- to C-terminus: Holliday junction branch migration complex subunit RuvB (351 aa).

Positions 1 to 182 are large ATPase domain (RuvB-L); it reads MNDRLITPDA…FGIVQRLEYY (182 aa). ATP contacts are provided by residues I21, R22, G63, K66, T67, T68, 129 to 131, R172, Y182, and R219; that span reads EDF. A Mg(2+)-binding site is contributed by T67. Positions 183 to 253 are small ATPAse domain (RuvB-S); it reads NVADLSGIVK…VAHAAMELLN (71 aa). The segment at 256-351 is head domain (RuvB-H); the sequence is RNGFDEQDRR…QDAPPVGRER (96 aa). DNA-binding residues include R292, R311, and R316. Residues 328-351 form a disordered region; sequence LNPPRQPDTSPDLFQDAPPVGRER.

The protein belongs to the RuvB family. As to quaternary structure, homohexamer. Forms an RuvA(8)-RuvB(12)-Holliday junction (HJ) complex. HJ DNA is sandwiched between 2 RuvA tetramers; dsDNA enters through RuvA and exits via RuvB. An RuvB hexamer assembles on each DNA strand where it exits the tetramer. Each RuvB hexamer is contacted by two RuvA subunits (via domain III) on 2 adjacent RuvB subunits; this complex drives branch migration. In the full resolvosome a probable DNA-RuvA(4)-RuvB(12)-RuvC(2) complex forms which resolves the HJ.

The protein localises to the cytoplasm. The catalysed reaction is ATP + H2O = ADP + phosphate + H(+). In terms of biological role, the RuvA-RuvB-RuvC complex processes Holliday junction (HJ) DNA during genetic recombination and DNA repair, while the RuvA-RuvB complex plays an important role in the rescue of blocked DNA replication forks via replication fork reversal (RFR). RuvA specifically binds to HJ cruciform DNA, conferring on it an open structure. The RuvB hexamer acts as an ATP-dependent pump, pulling dsDNA into and through the RuvAB complex. RuvB forms 2 homohexamers on either side of HJ DNA bound by 1 or 2 RuvA tetramers; 4 subunits per hexamer contact DNA at a time. Coordinated motions by a converter formed by DNA-disengaged RuvB subunits stimulates ATP hydrolysis and nucleotide exchange. Immobilization of the converter enables RuvB to convert the ATP-contained energy into a lever motion, pulling 2 nucleotides of DNA out of the RuvA tetramer per ATP hydrolyzed, thus driving DNA branch migration. The RuvB motors rotate together with the DNA substrate, which together with the progressing nucleotide cycle form the mechanistic basis for DNA recombination by continuous HJ branch migration. Branch migration allows RuvC to scan DNA until it finds its consensus sequence, where it cleaves and resolves cruciform DNA. This Alkalilimnicola ehrlichii (strain ATCC BAA-1101 / DSM 17681 / MLHE-1) protein is Holliday junction branch migration complex subunit RuvB.